A 202-amino-acid chain; its full sequence is Glycerol-3-phosphate acyltransferase (202 aa).

6 consecutive transmembrane segments (helical) span residues 2 to 22 (MIIV…GFVI), 54 to 74 (FLVT…PLWL), 85 to 105 (FFTN…YPVY), 120 to 140 (VVLG…FIVL), 141 to 161 (KIFK…VIGS), and 162 to 182 (LIIQ…ILII).

The protein belongs to the PlsY family. As to quaternary structure, probably interacts with PlsX.

The protein localises to the cell membrane. It catalyses the reaction an acyl phosphate + sn-glycerol 3-phosphate = a 1-acyl-sn-glycero-3-phosphate + phosphate. It functions in the pathway lipid metabolism; phospholipid metabolism. In terms of biological role, catalyzes the transfer of an acyl group from acyl-phosphate (acyl-PO(4)) to glycerol-3-phosphate (G3P) to form lysophosphatidic acid (LPA). This enzyme utilizes acyl-phosphate as fatty acyl donor, but not acyl-CoA or acyl-ACP. In Staphylococcus aureus (strain USA300), this protein is Glycerol-3-phosphate acyltransferase.